The sequence spans 439 residues: MQIKENKQLCLISLGCSKNLVDSEVMLGKLYNYTLTNDAKSADVILINTCGFIESAKQESIQTILNAAKDKKRGAILIASGCLSERYKDEIKELIPEVDIFTGVGDYDKIDIMIAKKQNQFSEQVFLSEHYNARIITGSSVHAYVKISEGCNQKCSFCAIPSFKGKLQSRELNSILKEVENLALKGYKDMTFIAQDSSSFLYDKGQKDGLIQLISAIDKQQALKSARILYLYPSSTTLELIGAIESSPIFQNYFDMPIQHISDSMLKKMRRNSSQAHHLKLLDAMKQVKESFIRSTIIVGHPEENEGEFEELSAFLDEFQFDRLNIFAFSAEENTHAYSLEKVPKKTINARIKALNKIALKHQNHSFKALLNKPIKALVENKEGEYFYKARDLRWAPEVDGEILINDSALTTPLQPGHYTIVPSVFKDNILLAKVLSPF.

In terms of domain architecture, MTTase N-terminal spans 7-119 (KQLCLISLGC…IDIMIAKKQN (113 aa)). Positions 16, 50, 82, 151, 155, and 158 each coordinate [4Fe-4S] cluster. Residues 137–368 (TGSSVHAYVK…ALKHQNHSFK (232 aa)) enclose the Radical SAM core domain.

The protein belongs to the methylthiotransferase family. RimO subfamily. [4Fe-4S] cluster serves as cofactor.

It localises to the cytoplasm. It carries out the reaction L-aspartate(89)-[ribosomal protein uS12]-hydrogen + (sulfur carrier)-SH + AH2 + 2 S-adenosyl-L-methionine = 3-methylsulfanyl-L-aspartate(89)-[ribosomal protein uS12]-hydrogen + (sulfur carrier)-H + 5'-deoxyadenosine + L-methionine + A + S-adenosyl-L-homocysteine + 2 H(+). In terms of biological role, catalyzes the methylthiolation of an aspartic acid residue of ribosomal protein uS12. In Helicobacter pylori (strain P12), this protein is Ribosomal protein uS12 methylthiotransferase RimO.